We begin with the raw amino-acid sequence, 185 residues long: Ribosome-recycling factor (185 aa).

Belongs to the RRF family.

It is found in the cytoplasm. In terms of biological role, responsible for the release of ribosomes from messenger RNA at the termination of protein biosynthesis. May increase the efficiency of translation by recycling ribosomes from one round of translation to another. This is Ribosome-recycling factor from Streptococcus sanguinis (strain SK36).